Consider the following 762-residue polypeptide: Coleoptile phototropism protein 1 (762 aa).

Residues 1-12 show a composition bias toward basic and acidic residues; it reads MWESESESHGGE. Residues 1–29 form a disordered region; the sequence is MWESESESHGGERGLVPVGGGGGSGRHEA. The 78-residue stretch at 51 to 128 folds into the BTB domain; the sequence is SDLLVKVGDV…SYGMAVDLTA (78 aa). Positions 227–238 are enriched in gly residues; the sequence is PAAIRGGGGSGG. Disordered stretches follow at residues 227–264, 460–495, 687–718, and 731–762; these read PAAIRGGGGSGGTASPRWNVGGGGGGESKESSPSRQAV, MAVASSPGRGDPPPPPQPEYYSGRMPPSSAAAASAS, QVDGRGGGAPSPAAAKIGKQQQQGTSASAWSS, and GADAAAGGGVAPPGGGEAAARKGPRRWRNSIS. The region spanning 268 to 607 is the NPH3 domain; the sequence is DWWFEDVSVL…VQVLFTEQVK (340 aa). Positions 654–691 form a coiled coil; sequence AAAKKDINTLKFELESMKAKYLELQHEMDALQKQVDGR. The segment covering 696–709 has biased composition (low complexity); sequence PSPAAAKIGKQQQQ. Over residues 736 to 747 the composition is skewed to gly residues; that stretch reads AGGGVAPPGGGE. Over residues 752–762 the composition is skewed to basic residues; that stretch reads KGPRRWRNSIS.

The protein belongs to the NPH3 family.

Its pathway is protein modification; protein ubiquitination. Its function is as follows. May act as a substrate-specific adapter of an E3 ubiquitin-protein ligase complex (CUL3-RBX1-BTB) which mediates the ubiquitination and subsequent proteasomal degradation of target proteins. Plays a role as signal transduction component in coleoptile phototropism and lateral translocation of auxin. This is Coleoptile phototropism protein 1 (CPT1) from Oryza sativa subsp. japonica (Rice).